Reading from the N-terminus, the 161-residue chain is Small ribosomal subunit protein uS9 (161 aa).

This sequence belongs to the universal ribosomal protein uS9 family.

The sequence is that of Small ribosomal subunit protein uS9 from Bartonella tribocorum (strain CIP 105476 / IBS 506).